Here is a 98-residue protein sequence, read N- to C-terminus: NADH-ubiquinone oxidoreductase chain 4L (98 aa).

Helical transmembrane passes span 1–21 (MSLV…GLLM), 29–49 (SLLC…LTIL), and 59–79 (MPII…SLLV).

It belongs to the complex I subunit 4L family. As to quaternary structure, core subunit of respiratory chain NADH dehydrogenase (Complex I) which is composed of 45 different subunits.

The protein resides in the mitochondrion inner membrane. It catalyses the reaction a ubiquinone + NADH + 5 H(+)(in) = a ubiquinol + NAD(+) + 4 H(+)(out). Core subunit of the mitochondrial membrane respiratory chain NADH dehydrogenase (Complex I) which catalyzes electron transfer from NADH through the respiratory chain, using ubiquinone as an electron acceptor. Part of the enzyme membrane arm which is embedded in the lipid bilayer and involved in proton translocation. In Cervus elaphus (Red deer), this protein is NADH-ubiquinone oxidoreductase chain 4L (MT-ND4L).